Reading from the N-terminus, the 968-residue chain is Bifunctional glyoxylate cycle protein (968 aa).

The segment at 1-443 is isocitrate lyase; sequence MSSAAKNFYQ…AVASQDEEIL (443 aa). Residues 444-968 form a malate synthase region; that stretch reads SLTAQNVAGD…AYDRLVSEGY (525 aa). Arg-601 functions as the Proton acceptor in the catalytic mechanism. The Proton donor role is filled by Asp-881.

This sequence in the N-terminal section; belongs to the isocitrate lyase/PEP mutase superfamily. Isocitrate lyase family. It in the C-terminal section; belongs to the malate synthase family. In terms of tissue distribution, intestinal and body wall muscle cells.

The enzyme catalyses D-threo-isocitrate = glyoxylate + succinate. It carries out the reaction glyoxylate + acetyl-CoA + H2O = (S)-malate + CoA + H(+). It participates in carbohydrate metabolism; glyoxylate cycle; (S)-malate from isocitrate: step 1/2. The protein operates within carbohydrate metabolism; glyoxylate cycle; (S)-malate from isocitrate: step 2/2. The sequence is that of Bifunctional glyoxylate cycle protein (icl-1) from Caenorhabditis elegans.